The sequence spans 1922 residues: Kinesin-related protein 4 (1922 aa).

The region spanning 22–343 (KIKVAIRVRP…LQFAKRAKRV (322 aa)) is the Kinesin motor domain. Residue 101–108 (GQTSSGKT) participates in ATP binding. The disordered stretch occupies residues 448-538 (QKIKKIKNSE…DDEFKDNLNL (91 aa)). Low complexity predominate over residues 456–468 (SENNISSSSSNSS). 2 stretches are compositionally biased toward acidic residues: residues 469 to 480 (GEEDDDDKDDEN) and 488 to 532 (DKDD…DDEF). Positions 562 to 1712 (QVKVKREDLD…ELESTKQKNL (1151 aa)) form a coiled coil. The segment at 1887-1922 (TSTDNLTTTSTSLKSKSSSNGENKENQNNNIIIKNN) is disordered.

It belongs to the TRAFAC class myosin-kinesin ATPase superfamily. Kinesin family.

It is found in the cytoplasm. Its subcellular location is the cytoskeleton. Its function is as follows. Microtubule-associated force-producing protein that plays a role in organelle transport. Its motor activity is directed toward the microtubule's plus end. Cooperates with dynein in organizing spindle assembly during cell division. This is Kinesin-related protein 4 (kif4) from Dictyostelium discoideum (Social amoeba).